Reading from the N-terminus, the 561-residue chain is MARNMNILTLFAVLIGSASAVYHPPSWTAWIAPKPWTAWKVHPPAWTAWKAHPPAWTAWKATPKPWTAWKAPPPAWTAWKATPKPWTAWKAPPPTWTAWKATPKPWTAWKAPPPAWTAWKATLKPWTAWKATPKPWTAWKATPKPWTAWKATPKPWTAWKATPKPWTAWKATPKPWTVWKATPKPWTAWKATPKPWTAWKAPPPAWSAWKATPKPWTVWKATPKPWTAWKATPKPWTAWKATPKPWTVWKATPKPWTAWKAPPPAWTAWKATPKPWTAWKAPPPTWTAWKATPKPWTAWKAPPPAWSAWKATPKPWTAWKATPKPWTAWKATPKPWTAWKATPKPWTAWKVPPPAWTAWKAHPPAWTAWKATPKPWTAWKAPPPAWTAWKATPKPWTAWKAPPPAWTAWKATPKPWTAWKATPKPWTVWKATPKPWTAWRATPPPTWTAWHGHGYGGYGKPGKPGKPGSKGPRGPAGPPGATGKTGRTGATGKRGPPGYPGKPGVPGRNGYVHIVFDGYGKWEIGKIERKNIREAVAKAWTAWNAGHGHGWTAWTAPPAYG.

Positions 1–20 (MARNMNILTLFAVLIGSASA) are cleaved as a signal peptide. Tyr22 carries the 3',4'-dihydroxyphenylalanine modification. Position 33 is a 4-hydroxyproline (Pro33). Residues 41 to 50 (VHPPAWTAWK) form an A-1; approximate repeat. Residues 41–410 (VHPPAWTAWK…APPPAWTAWK (370 aa)) form a 13 X 10 AA A-P-P-P-A-W-T-A-W-K region. 4 positions are modified to 7'-hydroxytryptophan: Trp46, Trp49, Trp56, and Trp59. Residues Trp46, Trp49, Trp56, and Trp59 are each glycosylated (C-linked (Man) hydroxytryptophan). The A-2; approximate repeat unit spans residues 51–60 (AHPPAWTAWK). A B-1 repeat occupies 61–70 (ATPKPWTAWK). Positions 61-440 (ATPKPWTAWK…ATPKPWTAWR (380 aa)) are 27 X 10 AA A-T-P-K-P-W-T-A-W-K. Pro65 carries the post-translational modification 4-hydroxyproline. C-linked (Man) tryptophan glycosylation occurs at Trp66. Trp69 bears the 7'-hydroxytryptophan mark. Trp69 carries C-linked (Man) hydroxytryptophan glycosylation. One copy of the A-3 repeat lies at 71-80 (APPPAWTAWK). 4-hydroxyproline occurs at positions 72, 73, and 74. Residues Trp76 and Trp79 each carry the 7'-hydroxytryptophan modification. C-linked (Man) hydroxytryptophan glycans are attached at residues Trp76 and Trp79. One copy of the B-2 repeat lies at 81 to 90 (ATPKPWTAWK). Pro85 carries the post-translational modification 4-hydroxyproline. Trp86 is a glycosylation site (C-linked (Man) tryptophan). Trp89 is subject to 7'-hydroxytryptophan. Trp89 carries a C-linked (Man) hydroxytryptophan glycan. An A-4; approximate repeat occupies 91 to 100 (APPPTWTAWK). A 4-hydroxyproline mark is found at Pro92, Pro93, and Pro94. Residues Trp96 and Trp99 each carry the 7'-hydroxytryptophan modification. C-linked (Man) hydroxytryptophan glycans are attached at residues Trp96 and Trp99. One copy of the B-3 repeat lies at 101 to 110 (ATPKPWTAWK). Pro105 carries the post-translational modification 4-hydroxyproline. Trp106 carries C-linked (Man) tryptophan glycosylation. A 7'-hydroxytryptophan modification is found at Trp109. Trp109 carries a C-linked (Man) hydroxytryptophan glycan. The A-5 repeat unit spans residues 111 to 120 (APPPAWTAWK). 4-hydroxyproline occurs at positions 112, 113, and 114. 7'-hydroxytryptophan occurs at positions 116 and 119. C-linked (Man) hydroxytryptophan glycosylation is found at Trp116 and Trp119. Residues 121-130 (ATLKPWTAWK) form a B-4; approximate repeat. Residue Pro125 is modified to 4-hydroxyproline. The C-linked (Man) tryptophan glycan is linked to Trp126. 7'-hydroxytryptophan is present on Trp129. Trp129 carries C-linked (Man) hydroxytryptophan glycosylation. The stretch at 131-140 (ATPKPWTAWK) is one B-5 repeat. Pro135 carries the post-translational modification 4-hydroxyproline. A C-linked (Man) tryptophan glycan is attached at Trp136. Trp139 carries the post-translational modification 7'-hydroxytryptophan. Residue Trp139 is glycosylated (C-linked (Man) hydroxytryptophan). A B-6 repeat occupies 141–150 (ATPKPWTAWK). Pro145 carries the 4-hydroxyproline modification. Trp146 is a glycosylation site (C-linked (Man) tryptophan). The residue at position 149 (Trp149) is a 7'-hydroxytryptophan. The C-linked (Man) hydroxytryptophan glycan is linked to Trp149. A B-7 repeat occupies 151–160 (ATPKPWTAWK). Pro155 carries the post-translational modification 4-hydroxyproline. A C-linked (Man) tryptophan glycan is attached at Trp156. Trp159 carries the post-translational modification 7'-hydroxytryptophan. A glycan (C-linked (Man) hydroxytryptophan) is linked at Trp159. The B-8 repeat unit spans residues 161-170 (ATPKPWTAWK). Pro165 bears the 4-hydroxyproline mark. Trp166 carries C-linked (Man) tryptophan glycosylation. Trp169 is subject to 7'-hydroxytryptophan. Residue Trp169 is glycosylated (C-linked (Man) hydroxytryptophan). The stretch at 171–180 (ATPKPWTVWK) is one B-9; approximate repeat. 4-hydroxyproline is present on Pro175. C-linked (Man) tryptophan glycosylation occurs at Trp176. Trp179 carries the post-translational modification 7'-hydroxytryptophan. The C-linked (Man) hydroxytryptophan glycan is linked to Trp179. A B-10 repeat occupies 181 to 190 (ATPKPWTAWK). Pro185 bears the 4-hydroxyproline mark. Trp186 carries a C-linked (Man) tryptophan glycan. Trp189 bears the 7'-hydroxytryptophan mark. Trp189 carries a C-linked (Man) hydroxytryptophan glycan. Residues 191-200 (ATPKPWTAWK) form a B-11 repeat. Pro195 is subject to 4-hydroxyproline. Trp196 carries a C-linked (Man) tryptophan glycan. 7'-hydroxytryptophan is present on Trp199. Trp199 carries a C-linked (Man) hydroxytryptophan glycan. An A-6; approximate repeat occupies 201-210 (APPPAWSAWK). 3 positions are modified to 4-hydroxyproline: Pro202, Pro203, and Pro204. 7'-hydroxytryptophan occurs at positions 206 and 209. Trp206 and Trp209 each carry a C-linked (Man) hydroxytryptophan glycan. The B-12; approximate repeat unit spans residues 211–220 (ATPKPWTVWK). The residue at position 215 (Pro215) is a 4-hydroxyproline. A C-linked (Man) tryptophan glycan is attached at Trp216. Trp219 is modified (7'-hydroxytryptophan). C-linked (Man) hydroxytryptophan glycosylation occurs at Trp219. A B-13 repeat occupies 221-230 (ATPKPWTAWK). Pro225 is modified (4-hydroxyproline). C-linked (Man) tryptophan glycosylation is present at Trp226. Trp229 carries the post-translational modification 7'-hydroxytryptophan. C-linked (Man) hydroxytryptophan glycosylation is present at Trp229. One copy of the B-14 repeat lies at 231 to 240 (ATPKPWTAWK). Residue Pro235 is modified to 4-hydroxyproline. Residue Trp236 is glycosylated (C-linked (Man) tryptophan). Position 239 is a 7'-hydroxytryptophan (Trp239). Trp239 is a glycosylation site (C-linked (Man) hydroxytryptophan). The stretch at 241–250 (ATPKPWTVWK) is one B-15; approximate repeat. Pro245 carries the post-translational modification 4-hydroxyproline. Trp246 carries C-linked (Man) tryptophan glycosylation. Trp249 bears the 7'-hydroxytryptophan mark. A C-linked (Man) hydroxytryptophan glycan is attached at Trp249. A B-16 repeat occupies 251-260 (ATPKPWTAWK). Pro255 is subject to 4-hydroxyproline. C-linked (Man) tryptophan glycosylation occurs at Trp256. The residue at position 259 (Trp259) is a 7'-hydroxytryptophan. Residue Trp259 is glycosylated (C-linked (Man) hydroxytryptophan). An A-7 repeat occupies 261 to 270 (APPPAWTAWK). Pro262, Pro263, and Pro264 each carry 4-hydroxyproline. 7'-hydroxytryptophan occurs at positions 266 and 269. Residues Trp266 and Trp269 are each glycosylated (C-linked (Man) hydroxytryptophan). One copy of the B-17 repeat lies at 271-280 (ATPKPWTAWK). A 4-hydroxyproline modification is found at Pro275. Trp276 carries C-linked (Man) tryptophan glycosylation. A 7'-hydroxytryptophan modification is found at Trp279. A C-linked (Man) hydroxytryptophan glycan is attached at Trp279. The A-8; approximate repeat unit spans residues 281–290 (APPPTWTAWK). 4-hydroxyproline is present on residues Pro282, Pro283, and Pro284. 2 positions are modified to 7'-hydroxytryptophan: Trp286 and Trp289. Residues Trp286 and Trp289 are each glycosylated (C-linked (Man) hydroxytryptophan). The stretch at 291–300 (ATPKPWTAWK) is one B-18 repeat. Position 295 is a 4-hydroxyproline (Pro295). Trp296 carries C-linked (Man) tryptophan glycosylation. Trp299 is modified (7'-hydroxytryptophan). Residue Trp299 is glycosylated (C-linked (Man) hydroxytryptophan). The A-9; approximate repeat unit spans residues 301 to 310 (APPPAWSAWK). 4-hydroxyproline occurs at positions 302, 303, and 304. A 7'-hydroxytryptophan mark is found at Trp306 and Trp309. 2 C-linked (Man) hydroxytryptophan glycosylation sites follow: Trp306 and Trp309. Residues 311 to 320 (ATPKPWTAWK) form a B-19 repeat. Pro315 carries the 4-hydroxyproline modification. A glycan (C-linked (Man) tryptophan) is linked at Trp316. Trp319 is subject to 7'-hydroxytryptophan. The C-linked (Man) hydroxytryptophan glycan is linked to Trp319. The stretch at 321 to 330 (ATPKPWTAWK) is one B-20 repeat. Residue Pro325 is modified to 4-hydroxyproline. C-linked (Man) tryptophan glycosylation is present at Trp326. Trp329 is subject to 7'-hydroxytryptophan. A glycan (C-linked (Man) hydroxytryptophan) is linked at Trp329. Residues 331–340 (ATPKPWTAWK) form a B-21 repeat. Pro335 carries the 4-hydroxyproline modification. The C-linked (Man) tryptophan glycan is linked to Trp336. Trp339 carries the post-translational modification 7'-hydroxytryptophan. C-linked (Man) hydroxytryptophan glycosylation occurs at Trp339. The stretch at 341–350 (ATPKPWTAWK) is one B-22 repeat. The residue at position 345 (Pro345) is a 4-hydroxyproline. A C-linked (Man) tryptophan glycan is attached at Trp346. Trp349 is subject to 7'-hydroxytryptophan. A glycan (C-linked (Man) hydroxytryptophan) is linked at Trp349. The A-10; approximate repeat unit spans residues 351 to 360 (VPPPAWTAWK). 4-hydroxyproline is present on residues Pro352, Pro353, and Pro354. A 7'-hydroxytryptophan mark is found at Trp356, Trp359, Trp366, and Trp369. Trp356, Trp359, Trp366, and Trp369 each carry a C-linked (Man) hydroxytryptophan glycan. An A-11; approximate repeat occupies 361-370 (AHPPAWTAWK). Residues 371–380 (ATPKPWTAWK) form a B-23 repeat. Position 375 is a 4-hydroxyproline (Pro375). Trp376 is a glycosylation site (C-linked (Man) tryptophan). Trp379 carries the post-translational modification 7'-hydroxytryptophan. Trp379 is a glycosylation site (C-linked (Man) hydroxytryptophan). An A-12 repeat occupies 381–390 (APPPAWTAWK). Residues Pro382, Pro383, and Pro384 each carry the 4-hydroxyproline modification. 7'-hydroxytryptophan is present on residues Trp386 and Trp389. C-linked (Man) hydroxytryptophan glycans are attached at residues Trp386 and Trp389. A B-24 repeat occupies 391-400 (ATPKPWTAWK). Residue Pro395 is modified to 4-hydroxyproline. The C-linked (Man) tryptophan glycan is linked to Trp396. Trp399 bears the 7'-hydroxytryptophan mark. C-linked (Man) hydroxytryptophan glycosylation occurs at Trp399. One copy of the A-13 repeat lies at 401-410 (APPPAWTAWK). 4-hydroxyproline occurs at positions 402, 403, and 404. 2 positions are modified to 7'-hydroxytryptophan: Trp406 and Trp409. C-linked (Man) hydroxytryptophan glycans are attached at residues Trp406 and Trp409. The B-25 repeat unit spans residues 411-420 (ATPKPWTAWK). Pro415 is subject to 4-hydroxyproline. Trp416 is a glycosylation site (C-linked (Man) tryptophan). The residue at position 419 (Trp419) is a 7'-hydroxytryptophan. The C-linked (Man) hydroxytryptophan glycan is linked to Trp419. One copy of the B-26; approximate repeat lies at 421 to 430 (ATPKPWTVWK). Pro425 bears the 4-hydroxyproline mark. The C-linked (Man) tryptophan glycan is linked to Trp426. Trp429 is subject to 7'-hydroxytryptophan. C-linked (Man) hydroxytryptophan glycosylation is present at Trp429. A B-27; approximate repeat occupies 431–440 (ATPKPWTAWR). 4-hydroxyproline is present on Pro435. A glycan (C-linked (Man) tryptophan) is linked at Trp436. 7'-hydroxytryptophan is present on Trp439. C-linked (Man) hydroxytryptophan glycosylation occurs at Trp439. A disordered region spans residues 452–507 (GHGYGGYGKPGKPGKPGSKGPRGPAGPPGATGKTGRTGATGKRGPPGYPGKPGVPG). Residues 453-462 (HGYGGYGKPG) show a composition bias toward gly residues. Positions 459–510 (GKPGKPGKPGSKGPRGPAGPPGATGKTGRTGATGKRGPPGYPGKPGVPGRNG) constitute a Collagen-like domain. A compositionally biased stretch (low complexity) spans 466 to 496 (KPGSKGPRGPAGPPGATGKTGRTGATGKRGP). Residues Pro497, Pro500, and Pro506 each carry the 4-hydroxyproline modification.

Produced by the byssal gland.

The protein resides in the secreted. In terms of biological role, provides adhesiveness to the mussel's foot. Mussels produce one of the strongest water insoluble glues. The mussel's adhesive is a bundle of threads, called a byssus, formed by a fibrous collagenous core coated with adhesive proteins. The polypeptide is Foot protein 1 variant 1 (Perna viridis (Asian green mussel)).